Here is a 161-residue protein sequence, read N- to C-terminus: Nucleotide-binding protein lpg1167 (161 aa).

This sequence belongs to the YajQ family.

In terms of biological role, nucleotide-binding protein. This chain is Nucleotide-binding protein lpg1167, found in Legionella pneumophila subsp. pneumophila (strain Philadelphia 1 / ATCC 33152 / DSM 7513).